The following is a 960-amino-acid chain: Leucine-rich repeat receptor-like serine/threonine-protein kinase SKM1 (960 aa).

The N-terminal stretch at 1 to 29 (MSTSHHHHHPPYLITTLFFLFLNFSCLHA) is a signal peptide. The Extracellular portion of the chain corresponds to 30–634 (NELELLLSFK…VRKRSTKSWW (605 aa)). An intrachain disulfide couples cysteine 61 to cysteine 68. N-linked (GlcNAc...) asparagine glycosylation is found at asparagine 70, asparagine 83, asparagine 103, asparagine 108, asparagine 129, and asparagine 134. 22 LRR repeats span residues 71–96 (ISRV…TFRL), 97–120 (PFLQ…IFTT), 122–146 (SPSL…FLPN), 149–168 (TLDL…IGVF), 169–194 (SNLR…NLSR), 196–216 (EFLT…LGKM), 217–240 (KNLK…IGGL), 241–264 (SSLN…LGDL), 265–288 (KKLE…IFSL), 290–312 (NLIS…VAQM), 313–336 (QSLE…VTSL), 338–360 (RLKV…LGKH), 361–384 (NNLT…LCDS), 386–408 (HLTK…LGMC), 409–432 (QSLE…FTKL), 434–454 (LVNF…TWDM), 455–477 (PQLE…FSRS), 478–501 (KRLK…LMTF), 503–525 (EIMD…LSSC), 526–549 (KNLV…FAEF), 550–573 (QVLS…LGNI), and 575–598 (SLVQ…AFLA). N-linked (GlcNAc...) asparagine glycosylation is present at asparagine 191. Positions 221–226 (WIYLGY) match the CLE45 peptide binding motif. N-linked (GlcNAc...) asparagine glycosylation is found at asparagine 228 and asparagine 252. Residue asparagine 324 is glycosylated (N-linked (GlcNAc...) asparagine). Residues asparagine 362 and asparagine 372 are each glycosylated (N-linked (GlcNAc...) asparagine). Asparagine 537 carries N-linked (GlcNAc...) asparagine glycosylation. Residues asparagine 580 and asparagine 600 are each glycosylated (N-linked (GlcNAc...) asparagine). The chain crosses the membrane as a helical span at residues 635–655 (LIITSTFAAFLAVLVSGFFIV). Residues 656–960 (LVFQRTHNVL…TYLSKILSLA (305 aa)) are Cytoplasmic-facing. Residues 691–953 (FTVNTILSSL…SSSSSCTTYL (263 aa)) form the Protein kinase domain. Threonine 692 carries the phosphothreonine modification. Residues 697-705 (LSSLKDQNV) and lysine 717 each bind ATP. Tyrosine 834 carries the post-translational modification Phosphotyrosine.

It belongs to the protein kinase superfamily. Ser/Thr protein kinase family. As to quaternary structure, self-interacts. Binds to CLE45 present in the pistil, particularly under relatively high temperature (at 30 degrees Celsius). In terms of tissue distribution, expressed in pollen grains and roots vascular tissues. Present in roots.

It localises to the cell membrane. It carries out the reaction L-seryl-[protein] + ATP = O-phospho-L-seryl-[protein] + ADP + H(+). The enzyme catalyses L-threonyl-[protein] + ATP = O-phospho-L-threonyl-[protein] + ADP + H(+). Receptor with a serine/threonine-protein kinase activity. Together with SKM2, LRR-rich receptor-like kinase (LRR-RLK) required for male fertility by the perception of CLE43 and CLE45 peptides and the transduction of their promoting action in pollen tubes, especially under relatively high temperature (at 30 degrees Celsius), thus conferring tolerance against high temperature probably through the maintenance of mitochondrial activity. Seems to not be involved in the perception of CLE45 peptide in roots. This chain is Leucine-rich repeat receptor-like serine/threonine-protein kinase SKM1, found in Arabidopsis thaliana (Mouse-ear cress).